The chain runs to 275 residues: Large ribosomal subunit protein uL2c (275 aa).

Disordered stretches follow at residues 29–60 (PEKS…GHKR) and 225–252 (MNPV…PWGH). Over residues 51 to 60 (SRHRGGGHKR) the composition is skewed to basic residues.

This sequence belongs to the universal ribosomal protein uL2 family. Part of the 50S ribosomal subunit.

It localises to the plastid. Its subcellular location is the chloroplast. In Chlorokybus atmophyticus (Soil alga), this protein is Large ribosomal subunit protein uL2c (rpl2).